Consider the following 290-residue polypeptide: MIERSHHDLRKVFGELLQGDTCKFAASVFDPISVRMAYDLGFDVAIQGGSVASLQVLGAPDIALLTLDEYVEQVSRVGRASQIPIIGDADHGFGNALNVMRTVTELQKAGVAALTLEDTHLPAKYDEQSHVLIEREEAAAKIYAARFARSDDALSIIARTNVAVTTLDDSIARTAAYQKAGADAICLVGVKDFQHLEALTAHLRVPIMLINYGNPALSNVEKLSAANVRIVVNGHAPYLSAIKATYEALREQSGTEGSELSLPELLSKYTLSDSYREWAKTFLKSEHDSN.

Ser50 is a binding site for substrate. Position 88 (Asp88) interacts with Mg(2+). Arg159 and His235 together coordinate substrate.

Belongs to the isocitrate lyase/PEP mutase superfamily. Oxaloacetate decarboxylase family. Homotetramer; dimer of dimers. It depends on Mg(2+) as a cofactor.

It carries out the reaction oxaloacetate + H(+) = pyruvate + CO2. Its function is as follows. Catalyzes the decarboxylation of oxaloacetate into pyruvate. Seems to play a role in maintaining cellular concentrations of bicarbonate and pyruvate. The protein is Oxaloacetate decarboxylase 2 of Pseudomonas fluorescens (strain Pf0-1).